The primary structure comprises 423 residues: Serine--tRNA ligase (423 aa).

231–233 (TGE) contributes to the L-serine binding site. 262–264 (RSE) contacts ATP. Residue E285 coordinates L-serine. ATP is bound at residue 349–352 (EISS). S385 serves as a coordination point for L-serine.

This sequence belongs to the class-II aminoacyl-tRNA synthetase family. Type-1 seryl-tRNA synthetase subfamily. Homodimer. The tRNA molecule binds across the dimer.

It localises to the cytoplasm. The catalysed reaction is tRNA(Ser) + L-serine + ATP = L-seryl-tRNA(Ser) + AMP + diphosphate + H(+). The enzyme catalyses tRNA(Sec) + L-serine + ATP = L-seryl-tRNA(Sec) + AMP + diphosphate + H(+). Its pathway is aminoacyl-tRNA biosynthesis; selenocysteinyl-tRNA(Sec) biosynthesis; L-seryl-tRNA(Sec) from L-serine and tRNA(Sec): step 1/1. In terms of biological role, catalyzes the attachment of serine to tRNA(Ser). Is also able to aminoacylate tRNA(Sec) with serine, to form the misacylated tRNA L-seryl-tRNA(Sec), which will be further converted into selenocysteinyl-tRNA(Sec). This chain is Serine--tRNA ligase, found in Coxiella burnetii (strain CbuK_Q154) (Coxiella burnetii (strain Q154)).